A 913-amino-acid chain; its full sequence is Alanine--tRNA ligase (913 aa).

Positions 600, 604, 703, and 707 each coordinate Zn(2+).

It belongs to the class-II aminoacyl-tRNA synthetase family. Requires Zn(2+) as cofactor.

Its subcellular location is the cytoplasm. The catalysed reaction is tRNA(Ala) + L-alanine + ATP = L-alanyl-tRNA(Ala) + AMP + diphosphate. Functionally, catalyzes the attachment of alanine to tRNA(Ala) in a two-step reaction: alanine is first activated by ATP to form Ala-AMP and then transferred to the acceptor end of tRNA(Ala). Also edits incorrectly charged Ser-tRNA(Ala) and Gly-tRNA(Ala) via its editing domain. The protein is Alanine--tRNA ligase of Methanothrix thermoacetophila (strain DSM 6194 / JCM 14653 / NBRC 101360 / PT) (Methanosaeta thermophila).